Here is a 1639-residue protein sequence, read N- to C-terminus: Peroxide stress-activated histidine kinase mak1 (1639 aa).

Positions 38-49 (SFTNSQNSSVGS) are enriched in polar residues. A disordered region spans residues 38–76 (SFTNSQNSSVGSVHSPILESPTSLNRQHRNSFSFNNVSS). The span at 67-76 (NSFSFNNVSS) shows a compositional bias: low complexity. Residues 716 to 786 (PFPLLKVIID…NDWKSSLFSG (71 aa)) enclose the PAS 1 domain. Residues 789 to 841 (FYHEIRLQRFDNVYRYFICRAVPLRDCTGSVLHFFGTMTDVHDQKLAERELQK) form the PAC 1 domain. Residues 848 to 920 (NENSYRSLAE…ESLEGTFNNQ (73 aa)) enclose the PAS 2 domain. Residues 929-982 (FAAEIRFRSTDGHYRWHLVKSVCVNNSADTSTNLWLGTCTDIHDHKMLEEKLQE) enclose the PAC 2 domain. A Histidine kinase domain is found at 1000 to 1223 (NMSHEIRTPL…RFMWTATFTM (224 aa)). H1003 carries the phosphohistidine; by autocatalysis modification. The Response regulatory domain maps to 1507–1629 (SVLLAEDNII…HLSLIISGIL (123 aa)). D1559 carries the 4-aspartylphosphate modification.

Its subcellular location is the cytoplasm. The catalysed reaction is ATP + protein L-histidine = ADP + protein N-phospho-L-histidine.. Its function is as follows. Involved in the control of the SAPK-dependent transcriptional response to peroxide stress. Also has a role in G2/M regulation. The polypeptide is Peroxide stress-activated histidine kinase mak1 (mak1) (Schizosaccharomyces pombe (strain 972 / ATCC 24843) (Fission yeast)).